The chain runs to 309 residues: DDRGK domain-containing protein 1 (309 aa).

Residues 1–2 (MD) lie on the Lumenal side of the membrane. The helical transmembrane segment at 3 to 23 (LIILVGIASALLVVILTIFFL) threads the bilayer. The Cytoplasmic portion of the chain corresponds to 24 to 309 (QKKKGGTEAK…VSAGAGEGSS (286 aa)). Residues 30 to 178 (TEAKEAAAPP…RLVKEERERK (149 aa)) form a disordered region. Residues 53–84 (RRAQIARNQRNRLRQNAPAAAPAAAAALQAAD) show a composition bias toward low complexity. A compositionally biased stretch (acidic residues) spans 85 to 95 (AEGDNDDENPD). Over residues 107–178 (LDEKMGAKKR…RLVKEERERK (72 aa)) the composition is skewed to basic and acidic residues.

Belongs to the DDRGK1 family. In terms of assembly, interacts with Atg9; the interaction is transient.

Its subcellular location is the endoplasmic reticulum membrane. Its function is as follows. Substrate adapter for ufmylation, the covalent attachment of the ubiquitin-like modifier UFM1 to substrate proteins. Required for ufmylation of Atg9; protects the nervous system during aging, possibly by stabilizing Atg9 and supporting its function. This Drosophila persimilis (Fruit fly) protein is DDRGK domain-containing protein 1.